Reading from the N-terminus, the 314-residue chain is MSLKIVFAGTPQFAVPTLRALIDSSHRVLAVYTQPDRPSGRGQKIMESPVKEIARQNEIPIIQPFSLRDEVEQEKLIAMNADVMVVVAYGLILPKKALNAFRLGCVNVHASLLPRWRGAAPIQRAILAGDRETGISIMQMNEGLDTGDMLAKSACVISSEDTAADLHDRLSLIGADLLLESLAKLEKGDIKLEKQDEASATYASKIQKQEALINWRKSAVEIARQVRAFNPTPIAFTYFEGQPMRIWRATVVDEKTDFEPGVLVDADKKGISIAAGSGILRLHQLQLPGKRVCSAGDFINAHGDKLIPGKTVFG.

Ser-111 to Pro-114 is a (6S)-5,6,7,8-tetrahydrofolate binding site.

It belongs to the Fmt family.

The enzyme catalyses L-methionyl-tRNA(fMet) + (6R)-10-formyltetrahydrofolate = N-formyl-L-methionyl-tRNA(fMet) + (6S)-5,6,7,8-tetrahydrofolate + H(+). Its function is as follows. Attaches a formyl group to the free amino group of methionyl-tRNA(fMet). The formyl group appears to play a dual role in the initiator identity of N-formylmethionyl-tRNA by promoting its recognition by IF2 and preventing the misappropriation of this tRNA by the elongation apparatus. This Coxiella burnetii (strain CbuK_Q154) (Coxiella burnetii (strain Q154)) protein is Methionyl-tRNA formyltransferase.